The primary structure comprises 131 residues: Hydrogenase maturation factor HypA (131 aa).

Position 2 (H2) interacts with Ni(2+). Positions 73, 76, 105, and 108 each coordinate Zn(2+).

Belongs to the HypA/HybF family.

Functionally, involved in the maturation of [NiFe] hydrogenases. Required for nickel insertion into the metal center of the hydrogenase. This is Hydrogenase maturation factor HypA from Thermomicrobium roseum (strain ATCC 27502 / DSM 5159 / P-2).